We begin with the raw amino-acid sequence, 418 residues long: Glutamyl-tRNA reductase (418 aa).

Substrate is bound by residues 49-52 (TCNR), Ser-107, 112-114 (EPQ), and Gln-118. Cys-50 (nucleophile) is an active-site residue. 187-192 (GAGETI) provides a ligand contact to NADP(+).

Belongs to the glutamyl-tRNA reductase family. Homodimer.

It carries out the reaction (S)-4-amino-5-oxopentanoate + tRNA(Glu) + NADP(+) = L-glutamyl-tRNA(Glu) + NADPH + H(+). It functions in the pathway porphyrin-containing compound metabolism; protoporphyrin-IX biosynthesis; 5-aminolevulinate from L-glutamyl-tRNA(Glu): step 1/2. Catalyzes the NADPH-dependent reduction of glutamyl-tRNA(Glu) to glutamate 1-semialdehyde (GSA). The protein is Glutamyl-tRNA reductase of Vibrio campbellii (strain ATCC BAA-1116).